The primary structure comprises 392 residues: Norsolorinic acid reductase B (392 aa).

Asp75 provides a ligand contact to NADP(+). Catalysis depends on Tyr80, which acts as the Proton donor. Residues 184–185 (SD), Gln210, 239–249 (GTLGQGSFQTE), and 311–319 (RKLEHIQGN) contribute to the NADP(+) site. The segment at 242–263 (GQGSFQTEEGRKQREKDNPGRK) is disordered. Basic and acidic residues predominate over residues 249-261 (EEGRKQREKDNPG).

The protein belongs to the aldo/keto reductase family. Aldo/keto reductase 2 subfamily.

The protein operates within mycotoxin biosynthesis. Norsolorinic acid reductase; part of the fragmented gene cluster that mediates the biosynthesis of dothistromin (DOTH), a polyketide toxin very similar in structure to the aflatoxin precursor, versicolorin B. The first step of the pathway is the conversion of acetate to norsolorinic acid (NOR) and requires the fatty acid synthase subunits hexA and hexB, as well as the polyketide synthase pksA. PksA combines a hexanoyl starter unit and 7 malonyl-CoA extender units to synthesize the precursor NOR. The hexanoyl starter unit is provided to the acyl-carrier protein (ACP) domain by the fungal fatty acid synthase hexA/hexB. The second step is the conversion of NOR to averantin (AVN) and requires the norsolorinic acid ketoreductase nor1, which catalyzes the dehydration of norsolorinic acid to form (1'S)-averantin. The cytochrome P450 monooxygenase avnA then catalyzes the hydroxylation of AVN to 5'hydroxyaverantin (HAVN). The next step is performed by adhA that transforms HAVN to averufin (AVF). Averufin might then be converted to hydroxyversicolorone by cypX and avfA. Hydroxyversicolorone is further converted versiconal hemiacetal acetate (VHA) by moxY. VHA is then the substrate for the versiconal hemiacetal acetate esterase est1 to yield versiconal (VAL). Versicolorin B synthase vbsA then converts VAL to versicolorin B (VERB) by closing the bisfuran ring. Then, the activity of the versicolorin B desaturase verB leads to versicolorin A (VERA). DotB, a predicted chloroperoxidase, may perform epoxidation of the A-ring of VERA. Alternatively, a cytochrome P450, such as cypX or avnA could catalyze this step. It is also possible that another, uncharacterized, cytochrome P450 enzyme is responsible for this step. Opening of the epoxide could potentially be achieved by the epoxide hydrolase epoA. However, epoA seems not to be required for DOTH biosynthesis, but other epoxide hydrolases may have the ability to complement this hydrolysis. Alternatively, opening of the epoxide ring could be achieved non-enzymatically. The next step is the deoxygenation of ring A to yield the 5,8-dihydroxyanthraquinone which is most likely catalyzed by the NADPH dehydrogenase encoded by ver1. The last stages of DOTH biosynthesis are proposed to involve hydroxylation of the bisfuran. OrdB and norB might have oxidative roles here. An alternative possibility is that cytochrome P450 monoogenases such as avnA and cypX might perform these steps in addition to previously proposed steps. The chain is Norsolorinic acid reductase B from Dothistroma septosporum (strain NZE10 / CBS 128990) (Red band needle blight fungus).